A 300-amino-acid polypeptide reads, in one-letter code: Type 1 fimbrin D-mannose specific adhesin (300 aa).

The first 21 residues, 1–21 (MKRVITLFAVLLMGWSVNAWS), serve as a signal peptide directing secretion.

It belongs to the fimbrial protein family.

It is found in the fimbrium. In terms of biological role, involved in regulation of length and mediation of adhesion of type 1 fimbriae (but not necessary for the production of fimbriae). Adhesin responsible for the binding to D-mannose. It is laterally positioned at intervals in the structure of the type 1 fimbriae. In order to integrate FimH in the fimbriae FimF and FimG are needed. The sequence is that of Type 1 fimbrin D-mannose specific adhesin (fimH) from Escherichia coli (strain K12).